Consider the following 318-residue polypeptide: Ribosomal lysine N-methyltransferase 5 (318 aa).

S-adenosyl-L-methionine-binding positions include tryptophan 95, 139–141, aspartate 161, tryptophan 214, and methionine 241; that span reads GSG.

The protein belongs to the class I-like SAM-binding methyltransferase superfamily. RKM5 family.

Its function is as follows. S-adenosyl-L-methionine-dependent protein-lysine N-methyltransferase that methylates 60S ribosomal protein L1. The protein is Ribosomal lysine N-methyltransferase 5 (RKM5) of Zygosaccharomyces rouxii (strain ATCC 2623 / CBS 732 / NBRC 1130 / NCYC 568 / NRRL Y-229).